A 1230-amino-acid chain; its full sequence is DNA-directed RNA polymerase, mitochondrial (1230 aa).

Residues 1 to 41 (MSALCWGRGAAGLKRALRPCGRPGLPGKEGTAGGVCGPRRS) constitute a mitochondrion transit peptide. Disordered regions lie at residues 18–55 (RPCG…DRRK), 95–115 (GSGD…KDAT), and 731–750 (VPAP…PHSA). Residues 732 to 744 (PAPPSEAPQPPEA) are compositionally biased toward pro residues. The mediates interaction with TEFM stretch occupies residues 802 to 1230 (FRGRTYPCPP…QVKRSTYFFS (429 aa)). Active-site residues include Asp922, Lys991, and Asp1151.

It belongs to the phage and mitochondrial RNA polymerase family. As to quaternary structure, homodimer. Component of the mitochondrial transcription initiation complex, composed at least of TFB2M, TFAM and POLRMT. In this complex TFAM recruits POLRMT to the promoter whereas TFB2M induces structural changes in POLRMT to enable promoter opening and trapping of the DNA non-template strand. Upon metabolic stress, forms a complex composed of FOXO3, SIRT3 and mitochondrial RNA polymerase POLRMT; the complex is recruited to mtDNA in a SIRT3-dependent manner. Also forms a complex composed of FOXO3, SIRT3, TFAM and POLRMT. Interacts with TFB1M and TFB2M, leading to the stimulation of transcription. Interacts with TEFM. Interacts with MTRES1.

The protein resides in the mitochondrion. It catalyses the reaction RNA(n) + a ribonucleoside 5'-triphosphate = RNA(n+1) + diphosphate. In terms of biological role, DNA-dependent RNA polymerase catalyzes the transcription of mitochondrial DNA into RNA using the four ribonucleoside triphosphates as substrates. Component of the mitochondrial transcription initiation complex, composed at least of TFB2M, TFAM and POLRMT that is required for basal transcription of mitochondrial DNA. In this complex, TFAM recruits POLRMT to a specific promoter whereas TFB2M induces structural changes in POLRMT to enable promoter opening and trapping of the DNA non-template strand. Has DNA primase activity. Catalyzes the synthesis of short RNA primers that are necessary for the initiation of lagging-strand DNA synthesis from the origin of light-strand DNA replication (OriL). The sequence is that of DNA-directed RNA polymerase, mitochondrial from Homo sapiens (Human).